Consider the following 294-residue polypeptide: Nucleotide-binding protein CPF_0343 (294 aa).

Residue 8–15 (GLSGAGKT) participates in ATP binding. 59 to 62 (DIRG) contacts GTP.

It belongs to the RapZ-like family.

Its function is as follows. Displays ATPase and GTPase activities. In Clostridium perfringens (strain ATCC 13124 / DSM 756 / JCM 1290 / NCIMB 6125 / NCTC 8237 / Type A), this protein is Nucleotide-binding protein CPF_0343.